The chain runs to 406 residues: Succinylornithine transaminase/acetylornithine aminotransferase (406 aa).

Pyridoxal 5'-phosphate-binding positions include 108–109 and Phe141; that span reads GA. Residue Arg144 coordinates N(2)-acetyl-L-ornithine. Pyridoxal 5'-phosphate is bound at residue 226–229; sequence DEVQ. At Lys255 the chain carries N6-(pyridoxal phosphate)lysine. A N(2)-acetyl-L-ornithine-binding site is contributed by Thr283. Thr284 serves as a coordination point for pyridoxal 5'-phosphate.

It belongs to the class-III pyridoxal-phosphate-dependent aminotransferase family. ArgD subfamily. In terms of assembly, homodimer. It depends on pyridoxal 5'-phosphate as a cofactor.

The protein resides in the cytoplasm. The enzyme catalyses N(2)-succinyl-L-ornithine + 2-oxoglutarate = N-succinyl-L-glutamate 5-semialdehyde + L-glutamate. It catalyses the reaction N(2)-acetyl-L-ornithine + 2-oxoglutarate = N-acetyl-L-glutamate 5-semialdehyde + L-glutamate. It functions in the pathway amino-acid biosynthesis; L-arginine biosynthesis; N(2)-acetyl-L-ornithine from L-glutamate: step 4/4. Its pathway is amino-acid degradation; L-arginine degradation via AST pathway; L-glutamate and succinate from L-arginine: step 3/5. Its function is as follows. Transaminates both N(2)-acetylornithine and N(2)-succinylornithine. In Pseudomonas aeruginosa (strain ATCC 15692 / DSM 22644 / CIP 104116 / JCM 14847 / LMG 12228 / 1C / PRS 101 / PAO1), this protein is Succinylornithine transaminase/acetylornithine aminotransferase (aruC).